We begin with the raw amino-acid sequence, 200 residues long: Large ribosomal subunit protein uL4 (200 aa).

The disordered stretch occupies residues 38–80 (GRQGSKQQKTRSDVSGGGKRPWRQKGTGRARAGTTRGPIWRGG).

Belongs to the universal ribosomal protein uL4 family. As to quaternary structure, part of the 50S ribosomal subunit.

In terms of biological role, one of the primary rRNA binding proteins, this protein initially binds near the 5'-end of the 23S rRNA. It is important during the early stages of 50S assembly. It makes multiple contacts with different domains of the 23S rRNA in the assembled 50S subunit and ribosome. Forms part of the polypeptide exit tunnel. The sequence is that of Large ribosomal subunit protein uL4 from Stutzerimonas stutzeri (strain A1501) (Pseudomonas stutzeri).